Consider the following 528-residue polypeptide: Ribonuclease Y (528 aa).

The helical transmembrane segment at 15-35 threads the bilayer; the sequence is SLLVFALICGSIIGYFLYSFF. A KH domain is found at 217 to 277; that stretch reads NISVVNIPNE…IRREIAKKTL (61 aa). Residues 343-436 enclose the HD domain; sequence VLKHSLEVAF…VAIADTLSSA (94 aa).

This sequence belongs to the RNase Y family.

The protein resides in the cell membrane. Functionally, endoribonuclease that initiates mRNA decay. This chain is Ribonuclease Y, found in Onion yellows phytoplasma (strain OY-M).